The primary structure comprises 158 residues: Probable host range protein 2-1 (158 aa).

This sequence belongs to the poxviridae C7 protein family.

Functionally, plays a role for multiplication of the virus in different cell types. The sequence is that of Probable host range protein 2-1 from Oryctolagus cuniculus (Rabbit).